The primary structure comprises 217 residues: UPF0319 protein VS_II0881 (217 aa).

Residues 1–21 form the signal peptide; sequence MKTIQSIALLSAIVAAPSVLA.

Belongs to the UPF0319 family.

The polypeptide is UPF0319 protein VS_II0881 (Vibrio atlanticus (strain LGP32) (Vibrio splendidus (strain Mel32))).